A 491-amino-acid polypeptide reads, in one-letter code: Probable folate-biopterin transporter 4 (491 aa).

6 helical membrane passes run V14–W34, S52–I72, T84–D104, L112–I132, V154–L174, and I179–L199. Residues K222–Q262 form a disordered region. Polar residues predominate over residues L224–S236. Positions N237 to K248 are enriched in basic residues. The span at K249 to K260 shows a compositional bias: basic and acidic residues. A run of 6 helical transmembrane segments spans residues M294–Y314, A323–I343, S356–S376, M389–L411, T437–F457, and F461–I481.

This sequence belongs to the major facilitator superfamily. Folate-biopterin transporter (TC 2.A.71) family.

It localises to the membrane. In terms of biological role, could mediate folate transport. This Arabidopsis thaliana (Mouse-ear cress) protein is Probable folate-biopterin transporter 4.